The chain runs to 928 residues: Probable outer membrane protein pmp10 (928 aa).

The first 25 residues, 1–25 (MKSQFSWLVLSSTLACFTSCSTVFA), serve as a signal peptide directing secretion. An Autotransporter domain is found at 635–928 (TLCSDRGFWA…NVDLGGKFQF (294 aa)).

Belongs to the PMP outer membrane protein family.

Its subcellular location is the secreted. The protein resides in the cell wall. The protein localises to the cell outer membrane. This is Probable outer membrane protein pmp10 (pmp10) from Chlamydia pneumoniae (Chlamydophila pneumoniae).